Consider the following 238-residue polypeptide: MNNVKLLIAGSAFFAMSAQAADRVSIDVKVTLEAAACTPILSNGGVVNFGSHSVNRLSTQHYTQIGTRNINMTITCESATGIAITARDTRMDSMTTGKDSGGQSGVKYTLNGGGYISQTTRLFGLGKTKDNKNIGSYAVLIDSNNISASNGSQTLAVSIAGADAVITGQKRAWQTLTAYPLAVDQSYYYTFVKPGETTPTPVTNAIIPLQVSASIANDLGGSEKIELDGKAVISVVYL.

Residues 1–20 (MNNVKLLIAGSAFFAMSAQA) form the signal peptide.

It to E.coli GltF.

This is an uncharacterized protein from Escherichia coli (strain K12).